We begin with the raw amino-acid sequence, 158 residues long: Endoribonuclease YbeY (158 aa).

3 residues coordinate Zn(2+): His-119, His-123, and His-129.

This sequence belongs to the endoribonuclease YbeY family. The cofactor is Zn(2+).

It localises to the cytoplasm. Functionally, single strand-specific metallo-endoribonuclease involved in late-stage 70S ribosome quality control and in maturation of the 3' terminus of the 16S rRNA. The sequence is that of Endoribonuclease YbeY from Acinetobacter baumannii (strain SDF).